The sequence spans 954 residues: Glycine dehydrogenase (decarboxylating) (954 aa).

Lys704 carries the post-translational modification N6-(pyridoxal phosphate)lysine.

It belongs to the GcvP family. The glycine cleavage system is composed of four proteins: P, T, L and H. Requires pyridoxal 5'-phosphate as cofactor.

It catalyses the reaction N(6)-[(R)-lipoyl]-L-lysyl-[glycine-cleavage complex H protein] + glycine + H(+) = N(6)-[(R)-S(8)-aminomethyldihydrolipoyl]-L-lysyl-[glycine-cleavage complex H protein] + CO2. The glycine cleavage system catalyzes the degradation of glycine. The P protein binds the alpha-amino group of glycine through its pyridoxal phosphate cofactor; CO(2) is released and the remaining methylamine moiety is then transferred to the lipoamide cofactor of the H protein. The chain is Glycine dehydrogenase (decarboxylating) from Rhizobium leguminosarum bv. trifolii (strain WSM2304).